Reading from the N-terminus, the 886-residue chain is Leucine--tRNA ligase (886 aa).

Positions 51–61 match the 'HIGH' region motif; it reads PYPSGRIHMGH. Positions 644-648 match the 'KMSKS' region motif; that stretch reads KMSKS. K647 serves as a coordination point for ATP.

The protein belongs to the class-I aminoacyl-tRNA synthetase family.

Its subcellular location is the cytoplasm. The enzyme catalyses tRNA(Leu) + L-leucine + ATP = L-leucyl-tRNA(Leu) + AMP + diphosphate. The sequence is that of Leucine--tRNA ligase from Bartonella tribocorum (strain CIP 105476 / IBS 506).